A 235-amino-acid chain; its full sequence is Sugar fermentation stimulation protein homolog (235 aa).

Belongs to the SfsA family.

The chain is Sugar fermentation stimulation protein homolog from Bartonella henselae (strain ATCC 49882 / DSM 28221 / CCUG 30454 / Houston 1) (Rochalimaea henselae).